We begin with the raw amino-acid sequence, 120 residues long: UPF0231 protein Ent638_0667 (120 aa).

It belongs to the UPF0231 family.

This Enterobacter sp. (strain 638) protein is UPF0231 protein Ent638_0667.